A 106-amino-acid chain; its full sequence is Movement protein TGB2 (106 aa).

Topologically, residues 1–8 (MPLTPPPD) are cytoplasmic. Residues 9 to 29 (YTRVYTALAIGASIAFFTGLI) traverse the membrane as a helical segment. Residues 30–73 (TRNTLPSVGDLQHNLPHGGRYRDGTKSVEYCGPRKLNSVESGSR) lie on the Lumenal side of the membrane. The helical transmembrane segment at 74–94 (WTFQPWLLVIVLVALIIALGR) threads the bilayer. Topologically, residues 95–106 (QGHNCRACGRSH) are cytoplasmic.

The protein belongs to the Tymovirales TGBp2 protein family.

It is found in the host endoplasmic reticulum membrane. Functionally, plays a role in viral cell-to-cell propagation, by facilitating genome transport to neighboring plant cells through plasmosdesmata,. The sequence is that of Movement protein TGB2 from Lilium (LSV).